The sequence spans 615 residues: UvrABC system protein C (615 aa).

Residues 12–91 enclose the GIY-YIG domain; that stretch reads EKPGVYIMKD…IKKYKPKYNV (80 aa). In terms of domain architecture, UVR spans 203–238; the sequence is DWLIQKLKEDMKKAAEELRFEEAARIRDQIFAIERT.

This sequence belongs to the UvrC family. In terms of assembly, interacts with UvrB in an incision complex.

Its subcellular location is the cytoplasm. In terms of biological role, the UvrABC repair system catalyzes the recognition and processing of DNA lesions. UvrC both incises the 5' and 3' sides of the lesion. The N-terminal half is responsible for the 3' incision and the C-terminal half is responsible for the 5' incision. This chain is UvrABC system protein C, found in Thermoanaerobacter pseudethanolicus (strain ATCC 33223 / 39E) (Clostridium thermohydrosulfuricum).